The chain runs to 159 residues: Cyclin-dependent kinase inhibitor 1 (159 aa).

At Ser2 the chain carries N-acetylserine. Ser2 is covalently cross-linked (Glycyl serine ester (Ser-Gly) (interchain with G-Cter in ubiquitin)). A C4-type zinc finger spans residues 12–40; sequence HRSKVCRCLFGPVDSEQLRRDCDALMAGC. Residues 17-24 form a required for binding cyclins region; the sequence is CRCLFGPV. The required for binding CDKs stretch occupies residues 53–58; the sequence is VTETPL. Residue Ser78 is modified to Phosphoserine; by NUAK1. The segment at 78 to 106 is disordered; that stretch reads SPGSRSRDDLGGDKRPSTSSALLQGPAPE. Basic and acidic residues predominate over residues 82-93; that stretch reads RSRDDLGGDKRP. Ser112 carries the phosphoserine; by GSK3-beta modification. Residues 118–142 form a disordered region; that stretch reads VSERPEDSPGGPGTSQGRKRRQTSL. Ser125 carries the post-translational modification Phosphoserine. Positions 135–159 match the PIP-box K+4 motif motif; the sequence is RKRRQTSLTDFYHSKRRLVFCKRKP. A Phosphothreonine; by PKA, PKB/AKT1, PIM1 and PIM2 modification is found at Thr140. Ser141 is subject to Phosphoserine; by NUAK1. An interaction with TRIM39 region spans residues 147-159; that stretch reads HSKRRLVFCKRKP.

This sequence belongs to the CDI family. In terms of assembly, interacts with HDAC1; the interaction is prevented by competitive binding of C10orf90/FATS to HDAC1 facilitating acetylation and protein stabilization of CDKN1A/p21. Interacts with MKRN1. Interacts with PSMA3. Interacts with PCNA. Component of the ternary complex, cyclin D-CDK4-CDKN1A. Interacts (via its N-terminal domain) with CDK4; the interaction promotes the assembly of the cyclin D-CDK4 complex, its nuclear translocation and promotes the cyclin D-dependent enzyme activity of CDK4. Binding to CDK2 leads to CDK2/cyclin E inactivation at the G1-S phase DNA damage checkpoint, thereby arresting cells at the G1-S transition during DNA repair. Interacts with PIM1. Interacts with STK11. Interacts with NUAK1. Interacts with DTL and TRIM39. Interacts with PKP3; the interaction sequesters CDKN1A to the cytoplasm thereby repressing its role as an inhibitor of CDK4- and CDK6-driven RB1 phosphorylation. In terms of processing, phosphorylation of Thr-140 or Ser-141 impairs binding to PCNA. Phosphorylation at Ser-112 by GSK3-beta enhances ubiquitination by the DCX(DTL) complex. Phosphorylation of Thr-140 by PIM2 enhances its stability and inhibits cell proliferation. Phosphorylation of Thr-140 by PIM1 results in the relocation of CDKN1A to the cytoplasm and enhanced CDKN1A protein stability. UV radiation-induced phosphorylation at Ser-78 and Ser-141 by NUAK1 leads to its degradation. Post-translationally, ubiquitinated by MKRN1; leading to polyubiquitination and 26S proteasome-dependent degradation. Ubiquitinated by the DCX(DTL) complex, also named CRL4(CDT2) complex, leading to its degradation during S phase or following UV irradiation. Ubiquitination by the DCX(DTL) complex is essential to control replication licensing and is PCNA-dependent: interacts with PCNA via its PIP-box, while the presence of the containing the 'K+4' motif in the PIP box, recruit the DCX(DTL) complex, leading to its degradation. Ubiquitination at Ser-2 leads to degradation by the proteasome pathway. Ubiquitinated by RNF114; leading to proteasomal degradation. Acetylation leads to protein stability. Acetylated in vitro on Lys-136, Lys-149, Lys-156 and Lys-158. Deacetylation by HDAC1 is prevented by competitive binding of C10orf90/FATS to HDAC1. Expressed in keratinocytes (at protein level).

It localises to the cytoplasm. The protein localises to the nucleus. May be involved in p53/TP53 mediated inhibition of cellular proliferation in response to DNA damage. Binds to and inhibits cyclin-dependent kinase activity, preventing phosphorylation of critical cyclin-dependent kinase substrates and blocking cell cycle progression. Functions in the nuclear localization and assembly of cyclin D-CDK4 complex and promotes its kinase activity towards RB1. At higher stoichiometric ratios, inhibits the kinase activity of the cyclin D-CDK4 complex. Inhibits DNA synthesis by DNA polymerase delta by competing with POLD3 for PCNA binding. Plays an important role in controlling cell cycle progression and DNA damage-induced G2 arrest. In terms of biological role, plays an important role in controlling cell cycle progression and DNA damage-induced G2 arrest. Involved in p53/TP53 mediated inhibition of cellular proliferation in response to DNA damage. Also involved in p53-independent DNA damage-induced G2 arrest mediated by CREB3L1 in astrocytes and osteoblasts. Binds to and inhibits cyclin-dependent kinase activity, preventing phosphorylation of critical cyclin-dependent kinase substrates and blocking cell cycle progression. Functions in the nuclear localization and assembly of cyclin D-CDK4 complex and promotes its kinase activity towards RB1. At higher stoichiometric ratios, inhibits the kinase activity of the cyclin D-CDK4 complex. Inhibits DNA synthesis by DNA polymerase delta by competing with POLD3 for PCNA binding. Negatively regulates the CDK4- and CDK6-driven phosphorylation of RB1 in keratinocytes, thereby resulting in the release of E2F1 and subsequent transcription of E2F1-driven G1/S phase promoting genes. In Mus musculus (Mouse), this protein is Cyclin-dependent kinase inhibitor 1 (Cdkn1a).